The primary structure comprises 94 residues: Small ribosomal subunit protein uS19 (94 aa).

This sequence belongs to the universal ribosomal protein uS19 family.

Its function is as follows. Protein S19 forms a complex with S13 that binds strongly to the 16S ribosomal RNA. The sequence is that of Small ribosomal subunit protein uS19 from Halothermothrix orenii (strain H 168 / OCM 544 / DSM 9562).